Consider the following 75-residue polypeptide: Small ribosomal subunit protein bS18 (75 aa).

This sequence belongs to the bacterial ribosomal protein bS18 family. As to quaternary structure, part of the 30S ribosomal subunit. Forms a tight heterodimer with protein bS6.

Functionally, binds as a heterodimer with protein bS6 to the central domain of the 16S rRNA, where it helps stabilize the platform of the 30S subunit. The protein is Small ribosomal subunit protein bS18 of Ruegeria sp. (strain TM1040) (Silicibacter sp.).